Reading from the N-terminus, the 517-residue chain is GMP synthase [glutamine-hydrolyzing] (517 aa).

In terms of domain architecture, Glutamine amidotransferase type-1 spans Arg9 to Leu199. Cys86 acts as the Nucleophile in catalysis. Catalysis depends on residues His173 and Glu175. One can recognise a GMPS ATP-PPase domain in the interval Trp200–Arg392. Ser227–Ser233 contributes to the ATP binding site.

In terms of assembly, homodimer.

The catalysed reaction is XMP + L-glutamine + ATP + H2O = GMP + L-glutamate + AMP + diphosphate + 2 H(+). It participates in purine metabolism; GMP biosynthesis; GMP from XMP (L-Gln route): step 1/1. In terms of biological role, catalyzes the synthesis of GMP from XMP. This Vibrio campbellii (strain ATCC BAA-1116) protein is GMP synthase [glutamine-hydrolyzing].